Reading from the N-terminus, the 324-residue chain is O-ureido-L-serine synthase (324 aa).

Lys-43 bears the N6-(pyridoxal phosphate)lysine mark. Pyridoxal 5'-phosphate-binding positions include Asn-73, Gly-177 to Thr-181, and Ser-265.

It belongs to the cysteine synthase/cystathionine beta-synthase family. In terms of assembly, homotetramer. It depends on pyridoxal 5'-phosphate as a cofactor.

The enzyme catalyses hydroxyurea + O-acetyl-L-serine = O-ureido-L-serine + acetate + H(+). It catalyses the reaction O-acetyl-L-serine + hydrogen sulfide = L-cysteine + acetate. Involved in the biosynthesis of the antibiotic D-cycloserine (DCS), a cyclic structural analog of D-alanine, used as an antitubercular agent. Catalyzes the addition of hydroxyurea on O-acetyl-L-serine (OAS) to yield O-ureido-L-serine. It prefers sulfide as the second substrate, followed by hydroxyurea, L-homocysteine, and thiosulfate. The protein is O-ureido-L-serine synthase of Streptomyces lavendulae.